A 606-amino-acid chain; its full sequence is UvrABC system protein C (606 aa).

A GIY-YIG domain is found at 19-97; that stretch reads QSCGVYQMIG…IKSLKPPYNI (79 aa). One can recognise a UVR domain in the interval 207–242; sequence EKVKKQLSSTMEKCSKEENYELAAIYRDRLKFLEQI.

It belongs to the UvrC family. Interacts with UvrB in an incision complex.

The protein localises to the cytoplasm. Functionally, the UvrABC repair system catalyzes the recognition and processing of DNA lesions. UvrC both incises the 5' and 3' sides of the lesion. The N-terminal half is responsible for the 3' incision and the C-terminal half is responsible for the 5' incision. The protein is UvrABC system protein C of Wolbachia sp. subsp. Brugia malayi (strain TRS).